Consider the following 339-residue polypeptide: Nitrilase (339 aa).

The CN hydrolase domain maps to 7 to 277 (YRVAAVQASP…EGITYADIDL (271 aa)). Residue Glu47 is the Proton acceptor of the active site. The active-site Proton donor is Lys128. The Nucleophile role is filled by Cys162.

Belongs to the carbon-nitrogen hydrolase superfamily. Nitrilase family.

The enzyme catalyses a nitrile + 2 H2O = a carboxylate + NH4(+). The polypeptide is Nitrilase (nit) (Bacillus sp. (strain OxB-1)).